A 430-amino-acid polypeptide reads, in one-letter code: MKTQMNYAKEGIFTKEMQIVAQKENLSKDFLLENIACGKIIIPANINHKSLDPNGIGFGLRTKVNVNLGVSNDCVDYSEEMKKVELAHKFDIEAIMDLSNYGKTSRFRDELVNVSKAMIGTVPVYDAVGFLEKDLKQIGAKDFLDVVYHHAKSGVDFMTIHAGINSRAAHIFKQSKRLTNIVSRGGSVLYAWMMMKDAENPFFEYYDDLLDICLKYDVTLSLGDALRPGSTHDASDGAQISELIELSLLTQRAWDVGVQVMIEGPGHMAINEIEANMQLEKRLCKGAPFYVLGPLVTDIGAGYDHISGAIGGAVAAASGADMLCYVTPAEHLRLPNLEDVREGIVATKIAAHAGDIAKLPKERARDDEMSKARQEIDWEKMFKLAIDGEKAKKMFNERRPDDLNSCSMCGKMCAMNTMNQILKGEDVSLA.

Residues N67, M96, Y125, H161, 183 to 185 (SRG), 224 to 227 (DALR), and E263 each bind substrate. A Zn(2+)-binding site is contributed by H267. Y290 is a binding site for substrate. Zn(2+) is bound at residue H331. [4Fe-4S] cluster-binding residues include C406, C409, and C413.

It belongs to the ThiC family. Homodimer. [4Fe-4S] cluster is required as a cofactor.

The catalysed reaction is 5-amino-1-(5-phospho-beta-D-ribosyl)imidazole + S-adenosyl-L-methionine = 4-amino-2-methyl-5-(phosphooxymethyl)pyrimidine + CO + 5'-deoxyadenosine + formate + L-methionine + 3 H(+). Its pathway is cofactor biosynthesis; thiamine diphosphate biosynthesis. In terms of biological role, catalyzes the synthesis of the hydroxymethylpyrimidine phosphate (HMP-P) moiety of thiamine from aminoimidazole ribotide (AIR) in a radical S-adenosyl-L-methionine (SAM)-dependent reaction. This chain is Phosphomethylpyrimidine synthase, found in Campylobacter jejuni (strain RM1221).